The sequence spans 107 residues: Glutaconyl-CoA decarboxylase subunit delta (107 aa).

Residues 10–32 (MINMTIVFGVLIVLGILMVLIHA) form a helical membrane-spanning segment. The tract at residues 37–60 (KKVQGKKKPVVAKPAPSAAASKRQ) is disordered. Low complexity predominate over residues 47-57 (VAKPAPSAAAS).

This sequence belongs to the OadG family. As to quaternary structure, heterooctamer consisting of two alpha, two beta, two gamma and two delta subunits.

It localises to the cell membrane. The catalysed reaction is (2E)-glutaconyl-CoA + Na(+)(in) + H(+) = (2E)-butenoyl-CoA + Na(+)(out) + CO2. Its pathway is amino-acid degradation; L-glutamate degradation via hydroxyglutarate pathway; crotonoyl-CoA from L-glutamate: step 5/5. In terms of biological role, part of the primary sodium pump glutaconyl-CoA decarboxylase (GCD). Possible membrane anchor for the alpha subunit. In Acidaminococcus fermentans (strain ATCC 25085 / DSM 20731 / CCUG 9996 / CIP 106432 / VR4), this protein is Glutaconyl-CoA decarboxylase subunit delta (gcdD).